The primary structure comprises 309 residues: Mitochondrial brown fat uncoupling protein 1 (309 aa).

The Mitochondrial intermembrane portion of the chain corresponds to 1-10; the sequence is MLRAPGSDAP. A helical membrane pass occupies residues 11–32; it reads PTLSVRIAAAAGAACLADMITF. Solcar repeat units follow at residues 11–104, 113–203, and 212–297; these read PTLS…VREW, ASLG…MKEA, and DDLP…LKRE. At 33 to 75 the chain is on the mitochondrial matrix side; sequence PLDTAKVRLQIQGEGQGQPPRAPRYRGVLGTVATLARTEGLQK. Arginine 58 serves as a coordination point for fatty acid 16:0. A helical membrane pass occupies residues 76-98; that stretch reads LYSGLPAGLQRQVGFASLRIGLY. Topologically, residues 99-118 are mitochondrial intermembrane; the sequence is DSVREWLSPGQGAAASLGSR. A helical transmembrane segment spans residues 119–135; it reads ISAGVMTGGAAVFIGQP. Topologically, residues 136–180 are mitochondrial matrix; that stretch reads TEVVKVRLQAQSHLHGRKPRYTGTYNAYRIIATTEGLTGLWKGTT. The helical transmembrane segment at 181–197 threads the bilayer; sequence PNLMRNVIINCTELVTY. Residues 198-214 are Mitochondrial intermembrane-facing; it reads DLMKEALVKNHLLADDL. Residues 215–234 traverse the membrane as a helical segment; that stretch reads PCHFLSALVAGFCTTVLSSP. The Mitochondrial matrix portion of the chain corresponds to 235–268; the sequence is VDVVKTRFVNSVPEQYTSVPNCAMTMLTKEGPLA. Cysteine 256 carries the post-translational modification Cysteine sulfenic acid (-SOH). Residues 269-291 traverse the membrane as a helical segment; that stretch reads FFKGFVPSFLRLGSWNVIMFVCF. Lysine 271 is a binding site for fatty acid 16:0. The Mitochondrial intermembrane segment spans residues 292-309; it reads EQLKRELMKSGRTVDCAT.

It belongs to the mitochondrial carrier (TC 2.A.29) family. As to quaternary structure, most probably functions as a monomer. Binds one purine nucleotide per monomer. However, has also been suggested to function as a homodimer or a homotetramer. Tightly associates with cardiolipin in the mitochondrion inner membrane; may stabilize and regulate its activity. Post-translationally, may undergo sulfenylation upon cold exposure. May increase the sensitivity of UCP1 thermogenic function to the activation by noradrenaline probably through structural effects. In terms of processing, may undergo ubiquitin-mediated proteasomal degradation.

Its subcellular location is the mitochondrion inner membrane. The catalysed reaction is H(+)(in) = H(+)(out). Its activity is regulated as follows. Has no constitutive proton transporter activity and has to be activated by long-chain fatty acids/LCFAs. Inhibited by purine nucleotides. Both purine nucleotides and LCFAs bind the cytosolic side of the transporter and directly compete to activate or inhibit it. Activated by noradrenaline and reactive oxygen species. Despite lacking canonical translational encoding for selenocysteine, a small pool of the protein has been observed to selectively incorporate selenocysteine at 'Cys-256'. Selenocysteine-modified protein is highly sensitive to redox modification and may constitute a pool of protein highly sensitive to activation by elevated levels of reactive oxygen species (ROS). Functionally, mitochondrial protein responsible for thermogenic respiration, a specialized capacity of brown adipose tissue and beige fat that participates in non-shivering adaptive thermogenesis to temperature and diet variations and more generally to the regulation of energy balance. Functions as a long-chain fatty acid/LCFA and proton symporter, simultaneously transporting one LCFA and one proton through the inner mitochondrial membrane. However, LCFAs remaining associated with the transporter via their hydrophobic tails, it results in an apparent transport of protons activated by LCFAs. Thereby, dissipates the mitochondrial proton gradient and converts the energy of substrate oxydation into heat instead of ATP. Regulates the production of reactive oxygen species/ROS by mitochondria. The chain is Mitochondrial brown fat uncoupling protein 1 from Canis lupus familiaris (Dog).